Here is a 394-residue protein sequence, read N- to C-terminus: Protein arginine N-methyltransferase 8 (394 aa).

A lipid anchor (N-myristoyl glycine) is attached at Gly-2. Positions 16-40 (MAENAAESTEVNSPPSQPPQPVVPA) are disordered. Short sequence motifs (SH3-binding) lie at residues 29–42 (PPSQ…PAKP) and 53–58 (PSCPGR). Residues 30-39 (PSQPPQPVVP) are compositionally biased toward pro residues. Arg-58 carries the omega-N-methylarginine; by autocatalysis modification. The residue at position 73 (Arg-73) is an Asymmetric dimethylarginine; by autocatalysis. The SAM-dependent MTase PRMT-type domain maps to 73–394 (RDYYFDSYAH…TSVSNDYKMR (322 aa)). S-adenosyl-L-methionine contacts are provided by residues His-86, Arg-95, Gly-119, 119–122 (GSGT), Glu-141, and Glu-170. Residues Glu-185 and Glu-194 contribute to the active site.

It belongs to the class I-like SAM-binding methyltransferase superfamily. Protein arginine N-methyltransferase family. PRMT8 subfamily. In terms of assembly, homodimer. Tetramer; individual homodimers associates to form a homotetramer. Homooctamer; individual homodimers associates to form a homooctamer and homooligomerization is required for proper localization to the cell membrane. Heterodimer with PRMT1; heterodimerization may recruit PRMT1 activity to the plasma membrane. Interacts with PRMT2 (via the SH3 domain). Interacts with FYN (via the SH3 domain). Interacts with EWS; independently of EWS methylation status. Brain-specific.

The protein localises to the cell membrane. The catalysed reaction is L-arginyl-[protein] + S-adenosyl-L-methionine = N(omega)-methyl-L-arginyl-[protein] + S-adenosyl-L-homocysteine + H(+). The enzyme catalyses L-arginyl-[protein] + 2 S-adenosyl-L-methionine = N(omega),N(omega)-dimethyl-L-arginyl-[protein] + 2 S-adenosyl-L-homocysteine + 2 H(+). In terms of biological role, S-adenosyl-L-methionine-dependent and membrane-associated arginine methyltransferase that can both catalyze the formation of omega-N monomethylarginine (MMA) and asymmetrical dimethylarginine (aDMA) in proteins such as NIFK, myelin basic protein, histone H4, H2A and H2A/H2B dimer. Able to mono- and dimethylate EWS protein; however its precise role toward EWS remains unclear as it still interacts with fully methylated EWS. This chain is Protein arginine N-methyltransferase 8, found in Homo sapiens (Human).